Here is a 411-residue protein sequence, read N- to C-terminus: Translation initiation factor 2 subunit gamma (411 aa).

In terms of domain architecture, tr-type G spans 9-203 (QAEVNIGMVG…AIEEFIPTPK (195 aa)). The tract at residues 18 to 25 (GHVDHGKT) is G1. Residues Asp-21, Thr-25, Gly-46, and Thr-48 each contribute to the Mg(2+) site. Residue 21-26 (DHGKTT) coordinates GTP. Residues 46-50 (GITIK) are G2. Zn(2+) is bound by residues Cys-61, Cys-64, Cys-73, and Cys-76. The segment at 90-93 (DSPG) is G3. GTP is bound by residues 146–149 (NKIE) and 181–183 (SAL). Positions 146-149 (NKIE) are G4. Positions 181-183 (SAL) are G5.

This sequence belongs to the TRAFAC class translation factor GTPase superfamily. Classic translation factor GTPase family. EIF2G subfamily. In terms of assembly, heterotrimer composed of an alpha, a beta and a gamma chain. Mg(2+) is required as a cofactor.

It carries out the reaction GTP + H2O = GDP + phosphate + H(+). In terms of biological role, eIF-2 functions in the early steps of protein synthesis by forming a ternary complex with GTP and initiator tRNA. This Pyrococcus furiosus (strain ATCC 43587 / DSM 3638 / JCM 8422 / Vc1) protein is Translation initiation factor 2 subunit gamma.